The following is a 465-amino-acid chain: Ribulose bisphosphate carboxylase large chain (465 aa).

Position 4 is an N6,N6,N6-trimethyllysine (K4). Substrate-binding residues include N113 and T163. The active-site Proton acceptor is the K165. K167 lines the substrate pocket. Mg(2+) contacts are provided by K191, D193, and E194. K191 carries the post-translational modification N6-carboxylysine. H284 acts as the Proton acceptor in catalysis. Residues R285, H317, and S369 each coordinate substrate.

The protein belongs to the RuBisCO large chain family. Type I subfamily. In terms of assembly, heterohexadecamer of 8 large chains and 8 small chains; disulfide-linked. The disulfide link is formed within the large subunit homodimers. Mg(2+) is required as a cofactor. The disulfide bond which can form in the large chain dimeric partners within the hexadecamer appears to be associated with oxidative stress and protein turnover.

Its subcellular location is the plastid. The protein localises to the chloroplast. The enzyme catalyses 2 (2R)-3-phosphoglycerate + 2 H(+) = D-ribulose 1,5-bisphosphate + CO2 + H2O. It catalyses the reaction D-ribulose 1,5-bisphosphate + O2 = 2-phosphoglycolate + (2R)-3-phosphoglycerate + 2 H(+). In terms of biological role, ruBisCO catalyzes two reactions: the carboxylation of D-ribulose 1,5-bisphosphate, the primary event in carbon dioxide fixation, as well as the oxidative fragmentation of the pentose substrate in the photorespiration process. Both reactions occur simultaneously and in competition at the same active site. This is Ribulose bisphosphate carboxylase large chain from Ephedra tweediana (Vining horsetail).